The sequence spans 220 residues: PKHD-type hydroxylase PCC7424_1929 (220 aa).

In terms of domain architecture, Fe2OG dioxygenase spans 77-173; that stretch reads KIHSLLFSRY…RLVAVGWVQS (97 aa). Positions 95, 97, and 154 each coordinate Fe cation. Position 164 (arginine 164) interacts with 2-oxoglutarate.

It depends on Fe(2+) as a cofactor. L-ascorbate serves as cofactor.

In Gloeothece citriformis (strain PCC 7424) (Cyanothece sp. (strain PCC 7424)), this protein is PKHD-type hydroxylase PCC7424_1929.